A 154-amino-acid polypeptide reads, in one-letter code: UPF0178 protein GDI0551/Gdia_1457 (154 aa).

This sequence belongs to the UPF0178 family.

The sequence is that of UPF0178 protein GDI0551/Gdia_1457 from Gluconacetobacter diazotrophicus (strain ATCC 49037 / DSM 5601 / CCUG 37298 / CIP 103539 / LMG 7603 / PAl5).